The following is a 130-amino-acid chain: S-protein homolog 22 (130 aa).

An N-terminal signal peptide occupies residues 1–21 (MKYFTIFFIFFSLCMFGHVSG).

Belongs to the plant self-incompatibility (S1) protein family.

Its subcellular location is the secreted. This is S-protein homolog 22 from Arabidopsis thaliana (Mouse-ear cress).